Reading from the N-terminus, the 289-residue chain is Bis(5'-nucleosyl)-tetraphosphatase, symmetrical (289 aa).

Belongs to the Ap4A hydrolase family.

It catalyses the reaction P(1),P(4)-bis(5'-adenosyl) tetraphosphate + H2O = 2 ADP + 2 H(+). Hydrolyzes diadenosine 5',5'''-P1,P4-tetraphosphate to yield ADP. The polypeptide is Bis(5'-nucleosyl)-tetraphosphatase, symmetrical (Yersinia pseudotuberculosis serotype O:1b (strain IP 31758)).